The sequence spans 390 residues: MALKLCFPPHKMPSFPDARIRSHRVFMASTIHSPSMEVGKVKKPFTPPREVHVQVTHSLAPEKREIFNSLNNWAQENILVLLKDVDKCWQPSDFLPDSASEGFDEQVMELRKRCKEIPDDYFIVLVGDMITEEALPTYQTMLNTLDGVRDETGASLTPWAIWTRAWTAEENRHGDLLNKYLYLSGRVDMKQIEKTIQYLIGSGMDPRTENNPYLGFIYTSFQERATFISHGNTARLAKEHGDLKLAQICGIIAADEKRHETAYTKIVEKLFEIDPDGTVLALADMMRKKVSMPAHLMYDGQDDNLFENFSSVAQRLGVYTAKDYADILEFLVGRWDIEKLTGLSGEGRKAQDYVCTLPPRIRRLEERAQSRVKKASATPFSWIFGREINL.

The transit peptide at 1-27 (MALKLCFPPHKMPSFPDARIRSHRVFM) directs the protein to the chloroplast. The Fe cation site is built by glutamate 132, glutamate 170, histidine 173, glutamate 223, glutamate 256, and histidine 259.

It belongs to the fatty acid desaturase type 2 family. As to quaternary structure, homodimer. Fe(2+) serves as cofactor.

It localises to the plastid. It is found in the chloroplast. It carries out the reaction octadecanoyl-[ACP] + 2 reduced [2Fe-2S]-[ferredoxin] + O2 + 2 H(+) = (9Z)-octadecenoyl-[ACP] + 2 oxidized [2Fe-2S]-[ferredoxin] + 2 H2O. It functions in the pathway lipid metabolism; fatty acid metabolism. In terms of biological role, converts stearoyl-ACP to oleoyl-ACP by introduction of a cis double bond between carbons 9 and 10 of the acyl chain. The chain is Stearoyl-[acyl-carrier-protein] 9-desaturase, chloroplastic from Olea europaea (Common olive).